The following is a 256-amino-acid chain: NAD-dependent protein deacylase 2 (256 aa).

The Deacetylase sirtuin-type domain maps to 1–256 (MDSHSPIATV…MPQVVSHIYR (256 aa)). NAD(+) contacts are provided by residues 25–44 (GAGLSADSGMPTYRGLGGLY) and 108–111 (QNID). Histidine 128 serves as the catalytic Proton acceptor. Zn(2+) is bound by residues cysteine 136, cysteine 139, cysteine 158, and cysteine 161. Residues 199 to 201 (GTT), 225 to 227 (NPG), and alanine 243 each bind NAD(+).

Belongs to the sirtuin family. Class III subfamily. Zn(2+) is required as a cofactor.

It localises to the cytoplasm. It catalyses the reaction N(6)-acetyl-L-lysyl-[protein] + NAD(+) + H2O = 2''-O-acetyl-ADP-D-ribose + nicotinamide + L-lysyl-[protein]. Functionally, NAD-dependent protein deacetylase which modulates the activities of several proteins which are inactive in their acetylated form. The chain is NAD-dependent protein deacylase 2 (cobB2) from Pseudomonas aeruginosa (strain ATCC 15692 / DSM 22644 / CIP 104116 / JCM 14847 / LMG 12228 / 1C / PRS 101 / PAO1).